The chain runs to 592 residues: Protein alan shepard (592 aa).

The tract at residues 1 to 68 (MGGPHHQHQQ…ASVAAAPPTP (68 aa)) is disordered. Residues 18–28 (VGGGNGHGGGA) show a composition bias toward gly residues. The segment covering 36–54 (PNSQQLPPQMPRSQNYANG) has biased composition (polar residues). Over residues 55-64 (SSSAASVAAA) the composition is skewed to low complexity. Phosphotyrosine is present on residues Tyr-124 and Tyr-140. Positions 162–224 (PATTTYGQRV…AQNQNQQGGE (63 aa)) are disordered. Over residues 176–224 (SPSNTNSSSSSNTGSQSGTLSTSLSNTTNTNTTMGPNGTAQNQNQQGGE) the composition is skewed to low complexity. 2 consecutive RRM domains span residues 229-307 (TNLY…IWVL) and 319-398 (TNLY…FADG). A disordered region spans residues 565-592 (PMTDSEQASTAASPDEAYTQYPHQAAPK).

Has a role in the perception of gravity. In Drosophila mojavensis (Fruit fly), this protein is Protein alan shepard.